The following is a 237-amino-acid chain: UPF0502 protein HEAR1280 (237 aa).

Residues 1-13 show a composition bias toward polar residues; it reads MNTEVMHSTSTES. The interval 1-21 is disordered; that stretch reads MNTEVMHSTSTESDAQEKPQA.

The protein belongs to the UPF0502 family.

The polypeptide is UPF0502 protein HEAR1280 (Herminiimonas arsenicoxydans).